The following is a 955-amino-acid chain: Probable autotransporter YcgV (955 aa).

The segment at 616–659 (ASGTVPEPTPNPEPTPAPAQPPIVNPDPTPEPAPTPKPTTTADA) is disordered. Over residues 622–652 (EPTPNPEPTPAPAQPPIVNPDPTPEPAPTPK) the composition is skewed to pro residues. Residues 687–955 (NQSKDGNIWL…QVNGGYRFSF (269 aa)) enclose the Autotransporter domain.

Upon overexpression shows increased adherence to polyvinyl chloride (PVC) plates, increased mature biofilm formation. The protein is Probable autotransporter YcgV (ycgV) of Escherichia coli (strain K12).